A 64-amino-acid polypeptide reads, in one-letter code: Large ribosomal subunit protein bL35 (64 aa).

Composition is skewed to basic residues over residues 1 to 15 and 23 to 43; these read MPKQ…KRFR and VRQK…RTRR. A disordered region spans residues 1–64; the sequence is MPKQKSHSGA…AGRIKRLLAR (64 aa).

It belongs to the bacterial ribosomal protein bL35 family.

This chain is Large ribosomal subunit protein bL35, found in Frankia alni (strain DSM 45986 / CECT 9034 / ACN14a).